The chain runs to 72 residues: Translation initiation factor IF-1 (72 aa).

Residues 1–72 form the S1-like domain; it reads MAKEGAIEVE…TRGRIVYRYK (72 aa).

It belongs to the IF-1 family. In terms of assembly, component of the 30S ribosomal translation pre-initiation complex which assembles on the 30S ribosome in the order IF-2 and IF-3, IF-1 and N-formylmethionyl-tRNA(fMet); mRNA recruitment can occur at any time during PIC assembly.

It localises to the cytoplasm. One of the essential components for the initiation of protein synthesis. Stabilizes the binding of IF-2 and IF-3 on the 30S subunit to which N-formylmethionyl-tRNA(fMet) subsequently binds. Helps modulate mRNA selection, yielding the 30S pre-initiation complex (PIC). Upon addition of the 50S ribosomal subunit IF-1, IF-2 and IF-3 are released leaving the mature 70S translation initiation complex. This Corynebacterium glutamicum (strain R) protein is Translation initiation factor IF-1.